A 419-amino-acid chain; its full sequence is Protein arginine N-methyltransferase 8-B (419 aa).

A compositionally biased stretch (basic residues) spans 1–14; sequence MGLRHSSRCLLLRR. The interval 1 to 79 is disordered; sequence MGLRHSSRCL…HTPHVSALSA (79 aa). Gly2 carries N-myristoyl glycine lipidation. Residues 33–63 are compositionally biased toward low complexity; that stretch reads QHQQQQSISSIPSSQSLQPSPLPKPVTSVHH. Arg83 carries the omega-N-methylarginine modification. Arg98 is subject to Asymmetric dimethylarginine. One can recognise an SAM-dependent MTase PRMT-type domain in the interval 98 to 402; that stretch reads RDYYFDSYAH…RDLDFTFELD (305 aa). S-adenosyl-L-methionine contacts are provided by residues His111, Arg120, Gly144, 144 to 147, Glu166, and Glu195; that span reads GSGT. Catalysis depends on residues Glu210 and Glu219.

Belongs to the class I-like SAM-binding methyltransferase superfamily. Protein arginine N-methyltransferase family. PRMT8 subfamily. Homodimer. Tetramer; individual homodimers associates to form a homotetramer. Homooctamer; individual homodimers associates to form a homooctamer and homooligomerization is required for proper localization to the cell membrane.

Its subcellular location is the cell membrane. It catalyses the reaction L-arginyl-[protein] + S-adenosyl-L-methionine = N(omega)-methyl-L-arginyl-[protein] + S-adenosyl-L-homocysteine + H(+). The enzyme catalyses L-arginyl-[protein] + 2 S-adenosyl-L-methionine = N(omega),N(omega)-dimethyl-L-arginyl-[protein] + 2 S-adenosyl-L-homocysteine + 2 H(+). In terms of biological role, S-adenosyl-L-methionine-dependent and membrane-associated arginine methyltransferase that can both catalyze the formation of omega-N monomethylarginine (MMA) and asymmetrical dimethylarginine (aDMA). In Danio rerio (Zebrafish), this protein is Protein arginine N-methyltransferase 8-B (prmt8b).